Here is a 657-residue protein sequence, read N- to C-terminus: Archaeal Lon protease (657 aa).

Topologically, residues 1–123 are cytoplasmic; sequence MEENIESVEE…KAEREKRDRS (123 aa). 57-64 serves as a coordination point for ATP; sequence GEPGTGKS. The chain crosses the membrane as a helical span at residues 124–144; it reads RSIMFVIFSVVLLGIIAAIVL. A topological domain (extracellular) is located at residue Arg-145. A helical transmembrane segment spans residues 146–166; the sequence is SITLIFFAIMAAAFLYMAMAF. Residues 167–657 are Cytoplasmic-facing; sequence NPVIRNERAM…ATTRAGNNAA (491 aa). Positions 433–618 constitute a Lon proteolytic domain; the sequence is GSVVGMVNGL…EDVLRVALVN (186 aa). Catalysis depends on residues Ser-525 and Lys-568.

This sequence belongs to the peptidase S16 family. Archaeal LonB subfamily. Homohexamer. Organized in a ring with a central cavity.

It localises to the cell membrane. Functionally, ATP-dependent serine protease that mediates the selective degradation of mutant and abnormal proteins as well as certain short-lived regulatory proteins. Degrades polypeptides processively. In Thermoplasma acidophilum (strain ATCC 25905 / DSM 1728 / JCM 9062 / NBRC 15155 / AMRC-C165), this protein is Archaeal Lon protease.